The primary structure comprises 325 residues: Elongation factor P--(R)-beta-lysine ligase (325 aa).

76 to 78 (SPE) provides a ligand contact to substrate. ATP-binding positions include 100 to 102 (RNE) and N109. Residue Y118 coordinates substrate. Residue 244-245 (EL) participates in ATP binding. E251 contacts substrate. Residue G300 participates in ATP binding.

It belongs to the class-II aminoacyl-tRNA synthetase family. EpmA subfamily. As to quaternary structure, homodimer.

The enzyme catalyses D-beta-lysine + L-lysyl-[protein] + ATP = N(6)-((3R)-3,6-diaminohexanoyl)-L-lysyl-[protein] + AMP + diphosphate + H(+). Functionally, with EpmB is involved in the beta-lysylation step of the post-translational modification of translation elongation factor P (EF-P) on 'Lys-34'. Catalyzes the ATP-dependent activation of (R)-beta-lysine produced by EpmB, forming a lysyl-adenylate, from which the beta-lysyl moiety is then transferred to the epsilon-amino group of EF-P 'Lys-34'. This chain is Elongation factor P--(R)-beta-lysine ligase, found in Salmonella choleraesuis (strain SC-B67).